The primary structure comprises 359 residues: Phosphate acyltransferase (359 aa).

Residues 337 to 359 (AAGAAQPAPETEVPGAHPSPHVA) form a disordered region.

The protein belongs to the PlsX family. In terms of assembly, homodimer. Probably interacts with PlsY.

The protein localises to the cytoplasm. It carries out the reaction a fatty acyl-[ACP] + phosphate = an acyl phosphate + holo-[ACP]. It functions in the pathway lipid metabolism; phospholipid metabolism. Functionally, catalyzes the reversible formation of acyl-phosphate (acyl-PO(4)) from acyl-[acyl-carrier-protein] (acyl-ACP). This enzyme utilizes acyl-ACP as fatty acyl donor, but not acyl-CoA. In Cupriavidus necator (strain ATCC 17699 / DSM 428 / KCTC 22496 / NCIMB 10442 / H16 / Stanier 337) (Ralstonia eutropha), this protein is Phosphate acyltransferase.